The sequence spans 315 residues: Secreted frizzled-related protein 3 (315 aa).

The first 21 residues, 1–21 (MWRGLPALALAALLLLGRAPA), serve as a signal peptide directing secretion. Residues 22 to 142 (GRAAACEPVR…LYDRGVCISP (121 aa)) form the FZ domain. Intrachain disulfides connect cysteine 27-cysteine 88, cysteine 35-cysteine 81, cysteine 72-cysteine 111, cysteine 100-cysteine 139, and cysteine 104-cysteine 128. N-linked (GlcNAc...) asparagine glycosylation is present at asparagine 41. The 121-residue stretch at 170 to 290 (CKCKPIKATQ…WDQKLRHLGK (121 aa)) folds into the NTR domain. The interval 284-315 (KLRHLGKGKGEPGQSDSALKTGKPGNARQTRS) is disordered.

The protein belongs to the secreted frizzled-related protein (sFRP) family.

It localises to the secreted. Soluble frizzled-related proteins (sFRPS) function as modulators of Wnt signaling through direct interaction with Wnts. They have a role in regulating cell growth and differentiation in specific cell types. SFRP3/FRZB appears to be involved in limb skeletogenesis. Antagonist of Wnt8 signaling. Regulates chondrocyte maturation and long bone development. This Gallus gallus (Chicken) protein is Secreted frizzled-related protein 3 (FRZB).